The sequence spans 311 residues: Ribosomal RNA small subunit methyltransferase H (311 aa).

S-adenosyl-L-methionine is bound by residues 32-34 (AGH), Asp-52, Phe-79, Asp-100, and Gln-107. The tract at residues 287-311 (TASQEELEENNRARSAKLRIAEKRK) is disordered. Positions 300–311 (RSAKLRIAEKRK) are enriched in basic residues.

Belongs to the methyltransferase superfamily. RsmH family.

It is found in the cytoplasm. It catalyses the reaction cytidine(1402) in 16S rRNA + S-adenosyl-L-methionine = N(4)-methylcytidine(1402) in 16S rRNA + S-adenosyl-L-homocysteine + H(+). Specifically methylates the N4 position of cytidine in position 1402 (C1402) of 16S rRNA. The chain is Ribosomal RNA small subunit methyltransferase H from Bacillus subtilis (strain 168).